The chain runs to 825 residues: Glycerol-3-phosphate acyltransferase 1, mitochondrial (825 aa).

Residues Met1 to Gly87 are Cytoplasmic-facing. The interval Asn80–Val120 is important for mitochondrial localization. The stretch at Leu88–Arg118 is an intramembrane region. The Cytoplasmic portion of the chain corresponds to Asp119–Leu825. Positions His230–Asp235 match the HXXXXD motif motif. CoA-binding residues include Arg278, Arg279, Lys288, Arg293, and Arg328. Residue Ser380 is modified to Phosphoserine. A disordered region spans residues Ser435–Ala455. Arg461 is a CoA binding site. Ser685 and Ser692 each carry phosphoserine. N6-acetyllysine is present on residues Lys777 and Lys781.

Belongs to the GPAT/DAPAT family. Highly expressed in adipose tissues and lung. Low expression in liver.

The protein resides in the mitochondrion outer membrane. It catalyses the reaction sn-glycerol 3-phosphate + an acyl-CoA = a 1-acyl-sn-glycero-3-phosphate + CoA. The enzyme catalyses (9Z,12Z)-octadecadienoyl-CoA + sn-glycerol 3-phosphate = 1-(9Z,12Z)-octadecadienoyl-sn-glycero-3-phosphate + CoA. It carries out the reaction sn-glycerol 3-phosphate + (9Z)-octadecenoyl-CoA = 1-(9Z-octadecenoyl)-sn-glycero-3-phosphate + CoA. The catalysed reaction is sn-glycerol 3-phosphate + octadecanoyl-CoA = 1-octadecanoyl-sn-glycero-3-phosphate + CoA. It catalyses the reaction sn-glycerol 3-phosphate + hexadecanoyl-CoA = 1-hexadecanoyl-sn-glycero-3-phosphate + CoA. The enzyme catalyses dodecanoyl-CoA + sn-glycerol 3-phosphate = 1-dodecanoyl-sn-glycerol 3-phosphate + CoA. It carries out the reaction 1-acyl-sn-glycero-3-phospho-(1'-sn-glycerol) + an acyl-CoA = a 1,2-diacyl-sn-glycero-3-phospho-(1'-sn-glycerol) + CoA. The protein operates within phospholipid metabolism; CDP-diacylglycerol biosynthesis; CDP-diacylglycerol from sn-glycerol 3-phosphate: step 1/3. Mitochondrial membrane protein that catalyzes the essential first step of biosynthesis of glycerolipids such as triglycerides, phosphatidic acids and lysophosphatidic acids. Esterifies acyl-group from acyl-coenzyme A (acyl-CoA) to the sn-1 position of glycerol-3-phosphate, to produce lysophosphatidic acid. Has a narrow hydrophobic binding cleft that selects for a linear acyl chain. Catalytic activity is higher for substrates with a 16-carbon acyl chain. The chain is Glycerol-3-phosphate acyltransferase 1, mitochondrial from Bos taurus (Bovine).